We begin with the raw amino-acid sequence, 305 residues long: Putative monooxygenase p33MONOX (305 aa).

The segment at 37–56 is disordered; it reads LEDPAPMTPPPSDMGSVPWK. Threonine 44 is modified (phosphothreonine). The short motif at 67–77 is the Flavin-containing monooxygenase motif element; the sequence is LAKVEEGEASL. Disordered regions lie at residues 158–236 and 259–305; these read QSGE…KYDS and QANR…PTGF. Residues 169 to 183 are compositionally biased toward low complexity; that stretch reads PASAQSTPSTTPHSS. Residue threonine 175 is modified to Phosphothreonine. Phosphoserine occurs at positions 182 and 183. Residues 193-210 are compositionally biased toward polar residues; sequence TSGSSTALPGPNPSTMDS.

This sequence belongs to the P33MONOX family. Interacts with NELFB, NOL12 and PRNP. Down-regulated in the occipital lobe of an early stage Alzheimer disease patients.

The protein resides in the cytoplasm. In terms of biological role, potential NADPH-dependent oxidoreductase. May be involved in the regulation of neuronal survival, differentiation and axonal outgrowth. This chain is Putative monooxygenase p33MONOX (KIAA1191), found in Homo sapiens (Human).